The following is a 480-amino-acid chain: Cysteine--tRNA ligase (480 aa).

Cys29 is a binding site for Zn(2+). Residues 31–41 (PTVYGHAHLGH) carry the 'HIGH' region motif. Zn(2+) contacts are provided by Cys221, His246, and Glu250. The 'KMSKS' region motif lies at 278–282 (KMGKS). Residue Lys281 participates in ATP binding.

This sequence belongs to the class-I aminoacyl-tRNA synthetase family. As to quaternary structure, monomer. Zn(2+) is required as a cofactor.

Its subcellular location is the cytoplasm. The catalysed reaction is tRNA(Cys) + L-cysteine + ATP = L-cysteinyl-tRNA(Cys) + AMP + diphosphate. This chain is Cysteine--tRNA ligase, found in Chlorobium chlorochromatii (strain CaD3).